A 417-amino-acid chain; its full sequence is Equilibrative nucleotide transporter 7 (417 aa).

The next 11 membrane-spanning stretches (helical) occupy residues 19-39 (LVCC…LTIT), 54-74 (VLTI…ATKE), 84-104 (IFGY…DLAS), 110-130 (VVAY…DAFV), 143-163 (PDFI…TSVL), 184-204 (LFIG…TLVF), 264-284 (LGIN…GFLY), 293-315 (GDWY…RFIP), 326-346 (KWIT…YFTA), 353-373 (WMLF…VCIF), and 392-412 (MCVF…LWLI).

The protein belongs to the SLC29A/ENT transporter (TC 2.A.57) family. Expressed in leaves and flowers.

It localises to the cell membrane. Its function is as follows. Nucleoside transporter that can mediate uptake of adenosine, uridine, guanosine or cytidine when expressed in a heterologous system (yeast). The polypeptide is Equilibrative nucleotide transporter 7 (ENT7) (Arabidopsis thaliana (Mouse-ear cress)).